The following is a 331-amino-acid chain: MNPIPSWPGRGRVTLVLLAVVPVALAYPWQSTRDYVLLGVAAAVVIGLFGFWRGLYFTTIARRGLAILRRRRRIAEPATCTRTTVLVWVGPPASDTNVLPLTLIARYLDRYGIRADTIRITSRVTASGDCRTWVGLTVVADDNLAALQARSARIPLQETAQVAARRLADHLREIGWEAGTAAPDEIPALVAADSRETWRGMRHTDSDYVAAYRVSADAELPDTLPAIRSRPAQETWIALEIAYAAGSSTRYTVAAACALRTDWRPGGTAPVAGLLPQHGNHVPALTALDPRSTRRLDGHTDAPADLLTRLHWPTPTAGAHRAPLTNAVSRT.

Transmembrane regions (helical) follow at residues 11–31 (GRVT…PWQS) and 37–57 (LLGV…GLYF).

Belongs to the EccE family. Part of the ESX-3 / type VII secretion system (T7SS), which is composed of cytosolic and membrane components. The ESX-3 membrane complex is composed of EccB3, EccC3, EccD3 and EccE3.

It is found in the cell inner membrane. Functionally, part of the ESX-3 specialized secretion system, which is important for iron and zinc uptake or homeostasis. This is ESX-3 secretion system protein EccE3 from Mycobacterium tuberculosis (strain CDC 1551 / Oshkosh).